Reading from the N-terminus, the 1222-residue chain is Alpha-mannosidase D (1222 aa).

The N-terminal stretch at 1 to 21 is a signal peptide; sequence MESSKFVKIIWVFGIWILVFT. At 22-1170 the chain is on the extracellular side; that stretch reads FLIIYNNYDY…KYNRPNHLAL (1149 aa). Histidine 71 and aspartate 73 together coordinate Zn(2+). Asparagine 175 is a glycosylation site (N-linked (GlcNAc...) asparagine). Positions 185 and 453 each coordinate Zn(2+). Aspartate 185 (nucleophile) is an active-site residue. N-linked (GlcNAc...) asparagine glycosylation is found at asparagine 492, asparagine 496, asparagine 547, asparagine 551, asparagine 566, asparagine 613, asparagine 665, asparagine 768, asparagine 785, asparagine 952, asparagine 981, asparagine 1069, and asparagine 1084. Low complexity predominate over residues 493–549; the sequence is KSNNKTNNNNNNNNKNNNNNNNNNNNNNNNLKNTNSISTTGSSSSSGSGSSNNNNNT. Residues 493–554 form a disordered region; the sequence is KSNNKTNNNN…NNNNTVNKSE (62 aa). Residues 1171–1191 form a helical membrane-spanning segment; it reads ILSLSIGIPAGILIIVIALVV. Over 1192 to 1222 the chain is Cytoplasmic; sequence TYKKRKNRKTLTSSNSSSNLIQQEDQTDYSP. Over residues 1202 to 1211 the composition is skewed to low complexity; that stretch reads LTSSNSSSNL. The tract at residues 1202–1222 is disordered; that stretch reads LTSSNSSSNLIQQEDQTDYSP. Residues 1212–1222 are compositionally biased toward polar residues; sequence IQQEDQTDYSP.

The protein belongs to the glycosyl hydrolase 38 family. It depends on Zn(2+) as a cofactor.

It is found in the membrane. It catalyses the reaction Hydrolysis of terminal, non-reducing alpha-D-mannose residues in alpha-D-mannosides.. This is Alpha-mannosidase D (manD) from Dictyostelium discoideum (Social amoeba).